The chain runs to 244 residues: UPF0246 protein SGO_1307 (244 aa).

The protein belongs to the UPF0246 family.

The sequence is that of UPF0246 protein SGO_1307 from Streptococcus gordonii (strain Challis / ATCC 35105 / BCRC 15272 / CH1 / DL1 / V288).